The sequence spans 72 residues: Hydrophobic protein OSR8 (72 aa).

Transmembrane regions (helical) follow at residues Phe-9–Cys-29 and Leu-39–Leu-59.

Belongs to the UPF0057 (PMP3) family.

The protein localises to the membrane. This Oryza sativa subsp. japonica (Rice) protein is Hydrophobic protein OSR8 (OSR8).